Here is a 549-residue protein sequence, read N- to C-terminus: Exodeoxyribonuclease 7 large subunit (549 aa).

The segment at 511 to 549 is disordered; it reads LVATDPPVDPKPTRKPVQKSSSPKPSSRKPKKSQQEDLF.

It belongs to the XseA family. As to quaternary structure, heterooligomer composed of large and small subunits.

The protein resides in the cytoplasm. The enzyme catalyses Exonucleolytic cleavage in either 5'- to 3'- or 3'- to 5'-direction to yield nucleoside 5'-phosphates.. Bidirectionally degrades single-stranded DNA into large acid-insoluble oligonucleotides, which are then degraded further into small acid-soluble oligonucleotides. The polypeptide is Exodeoxyribonuclease 7 large subunit (Beijerinckia indica subsp. indica (strain ATCC 9039 / DSM 1715 / NCIMB 8712)).